The sequence spans 311 residues: MNRTPSLHTKEKKGFIDMHTMWKGSISFGLVNIPIKLYAATEDKDIKLRSLHKEDHAPIKYEKVCTNCEKTLSPDEIVKGYEYVKGKYVVLTDEDLKSLKQEHEEKAVEIVDFVQLQEIDPIYFNRSYFVGPGDNGTKAYTLLREALRSTGKIGIANMTIRSKQQLAILRVYENCIVMESIHYPDEVRSAAQVPGVPDQSNVNDKELQTAITLIDELTAKFEPEKYEDTYRQALLQRVNDKLENKETAVTPDKAPPREDVIDLVSALQASIDRTRRPNRETPAAAPAQAAEPKGAGDKKQKTTRKKASGTS.

The region spanning 26–210 (ISFGLVNIPI…NVNDKELQTA (185 aa)) is the Ku domain. The tract at residues 269 to 311 (ASIDRTRRPNRETPAAAPAQAAEPKGAGDKKQKTTRKKASGTS) is disordered. Positions 282–293 (PAAAPAQAAEPK) are enriched in low complexity. The segment covering 301-311 (KTTRKKASGTS) has biased composition (basic residues).

The protein belongs to the prokaryotic Ku family. Homodimer. Interacts with LigD.

It localises to the spore core. With LigD forms a non-homologous end joining (NHEJ) DNA repair enzyme, which repairs dsDNA breaks with reduced fidelity. Binds linear dsDNA with 5'- and 3'- overhangs but not closed circular dsDNA nor ssDNA. Recruits and stimulates the ligase activity of LigD. Probably involved in DNA repair during spore germination. The polypeptide is Non-homologous end joining protein Ku (Bacillus subtilis (strain 168)).